The primary structure comprises 341 residues: DNA-directed RNA polymerase subunit alpha (341 aa).

The alpha N-terminal domain (alpha-NTD) stretch occupies residues 1–237 (MLSLSKNWNA…EQLQLFISFE (237 aa)). The alpha C-terminal domain (alpha-CTD) stretch occupies residues 247-341 (TDALPFSPYL…LSKRYEDSYN (95 aa)).

The protein belongs to the RNA polymerase alpha chain family. Homodimer. The RNAP catalytic core consists of 2 alpha, 1 beta, 1 beta' and 1 omega subunit. When a sigma factor is associated with the core the holoenzyme is formed, which can initiate transcription.

It carries out the reaction RNA(n) + a ribonucleoside 5'-triphosphate = RNA(n+1) + diphosphate. Functionally, DNA-dependent RNA polymerase catalyzes the transcription of DNA into RNA using the four ribonucleoside triphosphates as substrates. This is DNA-directed RNA polymerase subunit alpha from Rickettsia bellii (strain RML369-C).